Consider the following 306-residue polypeptide: Heterogeneous nuclear ribonucleoproteins C1/C2 (306 aa).

N-acetylalanine is present on Ala-2. Residues Lys-8, Lys-50, Lys-89, and Lys-94 each participate in a glycyl lysine isopeptide (Lys-Gly) (interchain with G-Cter in SUMO2) cross-link. In terms of domain architecture, RRM spans 16–87 (SRVFIGNLNT…QVLDINLAAE (72 aa)). Phosphoserine occurs at positions 107 and 108. The residue at position 109 (Thr-109) is a Phosphothreonine. Phosphoserine is present on residues Ser-113, Ser-115, and Ser-121. Disordered regions lie at residues 139–190 (YPAR…KLKG) and 221–306 (QSKQ…EDDS). A Nuclear localization signal motif is present at residues 155 to 161 (PSKRQRV). A phosphoserine mark is found at Ser-162 and Ser-166. Residues 175–185 (SKSGQRGSSKS) are compositionally biased toward low complexity. The residue at position 176 (Lys-176) is an N6-acetyllysine; alternate. Residue Lys-176 forms a Glycyl lysine isopeptide (Lys-Gly) (interchain with G-Cter in SUMO2); alternate linkage. Residues 190-238 (GDDLQAIKKELTQIKQKVDSLLENLEKIEKEQSKQAVEMKNDKSEEEQS) are a coiled coil. The segment covering 221 to 232 (QSKQAVEMKNDK) has biased composition (basic and acidic residues). Residues Lys-223 and Lys-229 each participate in a glycyl lysine isopeptide (Lys-Gly) (interchain with G-Cter in SUMO2) cross-link. A Glycyl lysine isopeptide (Lys-Gly) (interchain with G-Cter in SUMO2); alternate cross-link involves residue Lys-232. Lys-232 is covalently cross-linked (Glycyl lysine isopeptide (Lys-Gly) (interchain with G-Cter in SUMO1); alternate). Phosphoserine is present on residues Ser-233, Ser-238, Ser-239, and Ser-241. The segment covering 242–253 (VKKDETNVKMES) has biased composition (basic and acidic residues). Glycyl lysine isopeptide (Lys-Gly) (interchain with G-Cter in SUMO2) cross-links involve residues Lys-243 and Lys-244. Residue Lys-250 forms a Glycyl lysine isopeptide (Lys-Gly) (interchain with G-Cter in SUMO2); alternate linkage. Residue Lys-250 forms a Glycyl lysine isopeptide (Lys-Gly) (interchain with G-Cter in SUMO); alternate linkage. 2 positions are modified to phosphoserine: Ser-253 and Ser-260. Residues 255 to 276 (GGADDSAEEGDLLDDDDNEDRG) are compositionally biased toward acidic residues. The span at 277–287 (DDQLELIKDDE) shows a compositional bias: basic and acidic residues. A compositionally biased stretch (acidic residues) spans 288-306 (KEAEEGEDDRDSANGEDDS). Residues Ser-299 and Ser-306 each carry the phosphoserine modification.

It belongs to the RRM HNRPC family. RALY subfamily. As to quaternary structure, tetramer composed of 3 copies of isoform C1 and 1 copy of isoform C2. Assembly of 3 tetramers with bound pre-mRNA gives rise to a 19S complex that interacts with HNRNPA2B1 tetramers. Component of the 40S hnRNP particle. Identified in the spliceosome C complex. Interacts with IGF2BP1. Interacts with DHX9; this interaction is direct, enhanced probably by their concomitant binding to RNA and mediates the attachment to actin filaments. Interacts with PPIA/CYPA. Interacts with YWHAE. In terms of processing, phosphorylated on Ser-260 and Ser-299 in resting cells. Phosphorylated on Ser-253 and on 1 serine residue in the poly-Ser stretch at position 238 in response to hydrogen peroxide. Post-translationally, sumoylated. Sumoylation reduces affinity for mRNA. Ubiquitinated and degraded after nucleo-cytoplasmic transport by YWHAE.

It localises to the nucleus. Binds pre-mRNA and nucleates the assembly of 40S hnRNP particles. Interacts with poly-U tracts in the 3'-UTR or 5'-UTR of mRNA and modulates the stability and the level of translation of bound mRNA molecules. Single HNRNPC tetramers bind 230-240 nucleotides. Trimers of HNRNPC tetramers bind 700 nucleotides. May play a role in the early steps of spliceosome assembly and pre-mRNA splicing. N6-methyladenosine (m6A) has been shown to alter the local structure in mRNAs and long non-coding RNAs (lncRNAs) via a mechanism named 'm(6)A-switch', facilitating binding of HNRNPC, leading to regulation of mRNA splicing. The chain is Heterogeneous nuclear ribonucleoproteins C1/C2 (HNRNPC) from Homo sapiens (Human).